We begin with the raw amino-acid sequence, 409 residues long: MNVSAIVVEYNPMHNGHLYHIKKTKKLTNCDALVCIMSGNFVQRGFPSILDKWTKANIAISNGVDLVIELPTLYSLSSAEFFSFGAVSILDSLNIINSICFGSEIGNINALQDIATTLLEEPLEYKILLKNYLDKGISFAKARNLALVELNRDNKIMSENISKILSLSNNILGIEYLKSLLLLNSSIKPFTITREGADYKDENLHEEYSSASSIRKYLKENKNINILKDFLPLEGFLEFKRLITKGYNFSMEDSMINYIRYKYISGYKNLHNLIDVSEGLDNRIYKSLEKNFTYDSLVGEIKSKRYAYSRIGRILCQYFIGFENYDLNSLLKSTPNYMRVLASNEMGLKVLKKIKKHSSINIYTKLPKNTNTLLSLDIKATNAYSLLNNNIRFNEDYFRSPTIIKNTIY.

ATP-binding positions include 7 to 20 (VVEY…HLYH), Gly102, Asn169, and Arg194.

Belongs to the TmcAL family.

Its subcellular location is the cytoplasm. It carries out the reaction cytidine(34) in elongator tRNA(Met) + acetate + ATP = N(4)-acetylcytidine(34) in elongator tRNA(Met) + AMP + diphosphate. Catalyzes the formation of N(4)-acetylcytidine (ac(4)C) at the wobble position of elongator tRNA(Met), using acetate and ATP as substrates. First activates an acetate ion to form acetyladenylate (Ac-AMP) and then transfers the acetyl group to tRNA to form ac(4)C34. The polypeptide is tRNA(Met) cytidine acetate ligase (Clostridium botulinum (strain Kyoto / Type A2)).